A 446-amino-acid chain; its full sequence is Chromogranin-A (446 aa).

The N-terminal stretch at Ser1–Ala16 is a signal peptide. A disulfide bond links Cys33 and Cys54. A disordered region spans residues Ala85–Leu426. Phosphoserine is present on Ser97. The span at Val105–Glu138 shows a compositional bias: basic and acidic residues. Residues Glu160–Ala171 show a composition bias toward acidic residues. Position 209 is a phosphoserine (Ser209). Over residues Ala226–Asp243 the composition is skewed to basic and acidic residues. Ser286 is modified (phosphoserine). Position 304 is a glycine amide (Gly304). Position 319 is a phosphoserine (Ser319). Residues Ser319–Gly346 show a composition bias toward basic and acidic residues. Residues Glu347–Pro357 show a composition bias toward acidic residues. Ser360 is modified (phosphoserine). Met361 carries the methionine sulfoxide modification. 4 positions are modified to phosphoserine: Ser387, Ser391, Ser413, and Ser427. Over residues Tyr403–Asp420 the composition is skewed to basic and acidic residues. Residue Ser413 is glycosylated (O-linked (Xyl...) (chondroitin sulfate) serine).

The protein belongs to the chromogranin/secretogranin protein family. In terms of assembly, self-interacts; self-assembly is promoted in vitro by chondroitin sulfate attachment which occurs at mildly acidic pH conditions. Interacts with SCG3. Interacts with ITPR1 in the secretory granules. Post-translationally, O-glycosylated; contains chondroitin sulfate (CS). CS attachment is pH-dependent, being observed at mildly acidic conditions of pH 5 but not at neutral pH, and promotes self-assembly in vitro. In terms of processing, parathyroid CHGA is sulfated on tyrosine residues, whereas adrenal CHGA seems to be mainly sulfated on oligosaccharide residues.

It is found in the secreted. Its subcellular location is the cytoplasmic vesicle. The protein localises to the secretory vesicle. The protein resides in the neuronal dense core vesicle. Functionally, strongly inhibits glucose induced insulin release from the pancreas. In terms of biological role, inhibits low calcium-stimulated parathyroid cell secretion. Inhibits catecholamine release from chromaffin cells and noradrenergic neurons by acting as a non-competitive nicotinic cholinergic antagonist. Can induce mast cell migration, degranulation and production of cytokines and chemokines. Its function is as follows. Regulates granule biogenesis in endocrine cells by up-regulating the transcription of protease nexin 1 (SERPINE2) via a cAMP-PKA-SP1 pathway. This leads to inhibition of granule protein degradation in the Golgi complex which in turn promotes granule formation. This chain is Chromogranin-A (CHGA), found in Sus scrofa (Pig).